A 695-amino-acid chain; its full sequence is Segment polarity protein dishevelled homolog DVL-1 (695 aa).

One can recognise a DIX domain in the interval 1–85 (MAETKIIYHM…RVVSWLVLAE (85 aa)). The interval 89–236 (SDAGSQGTDS…RLRQTDRASS (148 aa)) is disordered. Positions 142-151 (SHRRERARRR) are enriched in basic residues. Basic and acidic residues predominate over residues 152-171 (NRDEAARTNGHPRGDRRREL). Low complexity predominate over residues 177–192 (SASTVLSSELESSSFI). Ser194 is modified (phosphoserine). Low complexity predominate over residues 201–214 (SRLSSSTEQSTSSR). Positions 215 to 228 (LIRKHKCRRRKQRL) are enriched in basic residues. The 73-residue stretch at 251–323 (TVTLNMERHH…NDDAVRVLRE (73 aa)) folds into the PDZ domain. Residues 425 to 499 (PDSGLEIRDR…SEQCYYVFGD (75 aa)) enclose the DEP domain. Residues 551-580 (PAYQDPGFSYGSGSAGSQQSEGSKSSGSTR) are compositionally biased toward low complexity. A disordered region spans residues 551–641 (PAYQDPGFSY…SQASAVAPGL (91 aa)). Over residues 622-635 (SQLSRGSSPRSQAS) the composition is skewed to polar residues.

It belongs to the DSH family. In terms of assembly, interacts with BRD7 and INVS. Interacts (via PDZ domain) with the VANGL1 and VANGL2 (via C-terminus). Interacts (via PDZ domain) with NXN. Interacts with CXXC4. Interacts with ARRB1; the interaction is enhanced by phosphorylation of DVL1. Interacts with CYLD. Interacts (via PDZ domain) with RYK. Self-associates (via DIX domain) and forms higher homooligomers. Interacts (via PDZ domain) with DACT1 and FZD7, where DACT1 and FZD7 compete for the same binding site. Interacts (via DEP domain) with MUSK; the interaction is direct and mediates the formation a DVL1, MUSK and PAK1 ternary complex involved in AChR clustering. Interacts (via PDZ domain) with TMEM88. Interacts with DCDC2. Interacts with FOXK2. Interacts with PKD1 (via extracellular domain). Interacts (via PDZ domain) with CCDC88C/DAPLE; competes with CCDC88C for binding to frizzled receptor FZD7 and dissociates from CCDC88C following initiation of non-canonical Wnt signaling when CCDC88C displaces DVL1 from ligand-activated FZD7. Post-translationally, ubiquitinated; undergoes both 'Lys-48'-linked ubiquitination, leading to its subsequent degradation by the ubiquitin-proteasome pathway, and 'Lys-63'-linked ubiquitination. The interaction with INVS is required for ubiquitination. Deubiquitinated by CYLD, which acts on 'Lys-63'-linked ubiquitin chains.

Its subcellular location is the cell membrane. The protein resides in the cytoplasm. The protein localises to the cytosol. It is found in the cytoplasmic vesicle. Participates in Wnt signaling by binding to the cytoplasmic C-terminus of frizzled family members and transducing the Wnt signal to down-stream effectors. Plays a role both in canonical and non-canonical Wnt signaling. Plays a role in the signal transduction pathways mediated by multiple Wnt genes. Required for LEF1 activation upon WNT1 and WNT3A signaling. DVL1 and PAK1 form a ternary complex with MUSK which is important for MUSK-dependent regulation of AChR clustering during the formation of the neuromuscular junction (NMJ). The protein is Segment polarity protein dishevelled homolog DVL-1 (Dvl1) of Rattus norvegicus (Rat).